The chain runs to 163 residues: Nucleotide-binding protein Acel_0286 (163 aa).

The protein belongs to the YajQ family.

Functionally, nucleotide-binding protein. This is Nucleotide-binding protein Acel_0286 from Acidothermus cellulolyticus (strain ATCC 43068 / DSM 8971 / 11B).